Consider the following 509-residue polypeptide: MDIRAAEITAILKEQIQNFGQEAEVSEVGQVLSVGDGIARVYGLDNVQAGEMVEFENGTRGMALNLEIDNVGIVIFGSDREIKEGQTVKRTRAIVDAPVGKGLLGRVVDALGNPIDGKGPIVYTERRRVDVKAPGIIPRKSVHEPMQTGLKAIDALIPIGRGQRELIIGDRQTGKTAVALDSILNQKPINQGTDEKAKLYCVYVAVGQKRSTVAQFVKVLEEQGALEYSIVVAATASDAAPMQFLAPFTGTAMGEYFRDNGMHALIIHDDLSKQAVAYRQMSLLLRRPPGREAYPGDVFYLHSRLLERAAKLNDSLGAGSLTALPVIETQANDVSAYIPTNVISITDGQIFLESDLFYQGIRPAVNVGLSVSRVGSSAQIKAMKQVAGKIKGELAQYRELAAFAQFGSDLDASTQKLLNRGARLTELLKQSQFSPLKVEEQVAVIFAGTNGYLDPLPVSKVREFEQGLLLALRSQHPEILEAIRSSKEISKDTTEKLTKALDAFAKSFA.

Position 169-176 (169-176 (GDRQTGKT)) interacts with ATP.

The protein belongs to the ATPase alpha/beta chains family. In terms of assembly, F-type ATPases have 2 components, CF(1) - the catalytic core - and CF(0) - the membrane proton channel. CF(1) has five subunits: alpha(3), beta(3), gamma(1), delta(1), epsilon(1). CF(0) has three main subunits: a(1), b(2) and c(9-12). The alpha and beta chains form an alternating ring which encloses part of the gamma chain. CF(1) is attached to CF(0) by a central stalk formed by the gamma and epsilon chains, while a peripheral stalk is formed by the delta and b chains.

The protein localises to the cell inner membrane. The catalysed reaction is ATP + H2O + 4 H(+)(in) = ADP + phosphate + 5 H(+)(out). Produces ATP from ADP in the presence of a proton gradient across the membrane. The alpha chain is a regulatory subunit. The sequence is that of ATP synthase subunit alpha from Xanthobacter autotrophicus (strain ATCC BAA-1158 / Py2).